The following is a 334-amino-acid chain: Ornithine carbamoyltransferase (334 aa).

Residues 57–60 (STRT), Gln84, Arg108, and 135–138 (HPTQ) contribute to the carbamoyl phosphate site. L-ornithine-binding positions include Asn169, Asp233, and 237–238 (SM). Carbamoyl phosphate contacts are provided by residues 275–276 (CL) and Arg320.

The protein belongs to the aspartate/ornithine carbamoyltransferase superfamily. OTCase family.

It is found in the cytoplasm. The enzyme catalyses carbamoyl phosphate + L-ornithine = L-citrulline + phosphate + H(+). Its pathway is amino-acid biosynthesis; L-arginine biosynthesis; L-arginine from L-ornithine and carbamoyl phosphate: step 1/3. In terms of biological role, reversibly catalyzes the transfer of the carbamoyl group from carbamoyl phosphate (CP) to the N(epsilon) atom of ornithine (ORN) to produce L-citrulline. The chain is Ornithine carbamoyltransferase from Vibrio parahaemolyticus serotype O3:K6 (strain RIMD 2210633).